The chain runs to 349 residues: Holliday junction branch migration complex subunit RuvB (349 aa).

Residues 1 to 186 (MSEDYLDRDV…FGFTAHMDFY (186 aa)) form a large ATPase domain (RuvB-L) region. ATP contacts are provided by residues leucine 25, arginine 26, glycine 67, lysine 70, threonine 71, serine 72, 133–135 (EDF), arginine 176, tyrosine 186, and arginine 223. A Mg(2+)-binding site is contributed by threonine 71. A small ATPAse domain (RuvB-S) region spans residues 187–257 (EPTELEGVLA…VAKAALAVYD (71 aa)). The head domain (RuvB-H) stretch occupies residues 260-349 (ELGLDRLDRA…GLSQPGLFES (90 aa)). The DNA site is built by arginine 315 and arginine 320.

The protein belongs to the RuvB family. As to quaternary structure, homohexamer. Forms an RuvA(8)-RuvB(12)-Holliday junction (HJ) complex. HJ DNA is sandwiched between 2 RuvA tetramers; dsDNA enters through RuvA and exits via RuvB. An RuvB hexamer assembles on each DNA strand where it exits the tetramer. Each RuvB hexamer is contacted by two RuvA subunits (via domain III) on 2 adjacent RuvB subunits; this complex drives branch migration. In the full resolvosome a probable DNA-RuvA(4)-RuvB(12)-RuvC(2) complex forms which resolves the HJ.

It localises to the cytoplasm. It carries out the reaction ATP + H2O = ADP + phosphate + H(+). The RuvA-RuvB-RuvC complex processes Holliday junction (HJ) DNA during genetic recombination and DNA repair, while the RuvA-RuvB complex plays an important role in the rescue of blocked DNA replication forks via replication fork reversal (RFR). RuvA specifically binds to HJ cruciform DNA, conferring on it an open structure. The RuvB hexamer acts as an ATP-dependent pump, pulling dsDNA into and through the RuvAB complex. RuvB forms 2 homohexamers on either side of HJ DNA bound by 1 or 2 RuvA tetramers; 4 subunits per hexamer contact DNA at a time. Coordinated motions by a converter formed by DNA-disengaged RuvB subunits stimulates ATP hydrolysis and nucleotide exchange. Immobilization of the converter enables RuvB to convert the ATP-contained energy into a lever motion, pulling 2 nucleotides of DNA out of the RuvA tetramer per ATP hydrolyzed, thus driving DNA branch migration. The RuvB motors rotate together with the DNA substrate, which together with the progressing nucleotide cycle form the mechanistic basis for DNA recombination by continuous HJ branch migration. Branch migration allows RuvC to scan DNA until it finds its consensus sequence, where it cleaves and resolves cruciform DNA. The chain is Holliday junction branch migration complex subunit RuvB from Mycobacterium leprae (strain Br4923).